The chain runs to 305 residues: Superoxide dismutase [Fe] 2, chloroplastic (305 aa).

The N-terminal 46 residues, 1–46 (MMNVAVTATPSSLLYSPLLLPSQGPNRRMQWKRNGKRRLGTKVAVS), are a transit peptide targeting the chloroplast. Fe cation contacts are provided by His77, His129, Asp228, and His232. The disordered stretch occupies residues 270-305 (AVQREQEGTETEDEENPDDEVPEVYLDSDIDVSEVD). A compositionally biased stretch (acidic residues) spans 277–305 (GTETEDEENPDDEVPEVYLDSDIDVSEVD).

Belongs to the iron/manganese superoxide dismutase family. Heterodimer with FSD3. Interacts with MRL7 and PRDA1. The cofactor is Fe cation.

Its subcellular location is the plastid. It is found in the chloroplast thylakoid. The enzyme catalyses 2 superoxide + 2 H(+) = H2O2 + O2. With respect to regulation, activated by cpn20/cpn21 (in vitro). Functionally, destroys superoxide anion radicals which are normally produced within the cells and which are toxic to biological systems. Plays important role in chloroplast development, particularly in the maintenance of thylakoids membranes. Seems to act as a heterodimer with FSD3. In Arabidopsis thaliana (Mouse-ear cress), this protein is Superoxide dismutase [Fe] 2, chloroplastic (FSD2).